Here is a 306-residue protein sequence, read N- to C-terminus: Acetyl-coenzyme A carboxylase carboxyl transferase subunit beta (306 aa).

In terms of domain architecture, CoA carboxyltransferase N-terminal spans Leu-25–Lys-294. Residues Glu-287–Ala-306 are disordered. A compositionally biased stretch (polar residues) spans Lys-294 to Ala-306.

Belongs to the AccD/PCCB family. Acetyl-CoA carboxylase is a heterohexamer composed of biotin carboxyl carrier protein (AccB), biotin carboxylase (AccC) and two subunits each of ACCase subunit alpha (AccA) and ACCase subunit beta (AccD).

Its subcellular location is the cytoplasm. It catalyses the reaction N(6)-carboxybiotinyl-L-lysyl-[protein] + acetyl-CoA = N(6)-biotinyl-L-lysyl-[protein] + malonyl-CoA. It participates in lipid metabolism; malonyl-CoA biosynthesis; malonyl-CoA from acetyl-CoA: step 1/1. In terms of biological role, component of the acetyl coenzyme A carboxylase (ACC) complex. Biotin carboxylase (BC) catalyzes the carboxylation of biotin on its carrier protein (BCCP) and then the CO(2) group is transferred by the transcarboxylase to acetyl-CoA to form malonyl-CoA. The polypeptide is Acetyl-coenzyme A carboxylase carboxyl transferase subunit beta (Bartonella bacilliformis (strain ATCC 35685 / KC583 / Herrer 020/F12,63)).